A 160-amino-acid polypeptide reads, in one-letter code: Ureidoglycolate lyase (160 aa).

The protein belongs to the ureidoglycolate lyase family. As to quaternary structure, homodimer. It depends on Ni(2+) as a cofactor.

It catalyses the reaction (S)-ureidoglycolate = urea + glyoxylate. It functions in the pathway nitrogen metabolism; (S)-allantoin degradation. Catalyzes the catabolism of the allantoin degradation intermediate (S)-ureidoglycolate, generating urea and glyoxylate. Involved in the utilization of allantoin as nitrogen source. The chain is Ureidoglycolate lyase from Salmonella agona (strain SL483).